The chain runs to 974 residues: Coiled-coil domain-containing protein 146 (974 aa).

Residues Met-1–Ser-44 are disordered. Acidic residues predominate over residues Glu-10–Glu-21. Ser-12 is subject to Phosphoserine. Coiled coils occupy residues Val-105–Glu-160, Lys-195–Asn-340, Leu-421–Leu-474, Lys-512–Gly-660, Gln-687–Ile-712, and Leu-767–Met-848.

In terms of assembly, interacts with CCDC38 and CCDC42. Interacts with intraflagellar transport proteins IFT20 and IFT88.

It localises to the cytoplasm. Its subcellular location is the cytoskeleton. The protein localises to the microtubule organizing center. It is found in the centrosome. The protein resides in the centriole. It localises to the cell projection. Its subcellular location is the cilium. The protein localises to the flagellum. It is found in the flagellum axoneme. The protein resides in the cilium basal body. It localises to the midbody. Its function is as follows. Essential for sperm flagellum biogenesis and male fertility. This chain is Coiled-coil domain-containing protein 146 (Ccdc146), found in Rattus norvegicus (Rat).